Here is a 949-residue protein sequence, read N- to C-terminus: Sensor histidine kinase RcsC (949 aa).

Residues 1 to 19 (MKYLASFRTTLKASRYMFR) are Cytoplasmic-facing. A helical transmembrane segment spans residues 20–41 (ALALVLWLLIAFSSVFYIVNAL). Residues 42–313 (HQRESEIRQE…PVDKVLERIR (272 aa)) lie on the Periplasmic side of the membrane. The helical transmembrane segment at 314-335 (MLILNAILLNVLAGAALFTLAR) threads the bilayer. The Cytoplasmic segment spans residues 336–949 (MYERRIFIPA…AERVRKSRDS (614 aa)). The PAS domain occupies 357 to 425 (QFNRKIVASA…VLTSNNTNLQ (69 aa)). The region spanning 476 to 692 (TVSHELRTPL…QFTVRIPLYG (217 aa)) is the Histidine kinase domain. The residue at position 479 (H479) is a Phosphohistidine; by autocatalysis. An ABL domain is found at 705 to 805 (SGKRCWLAVR…ARIYLIEMES (101 aa)). In terms of domain architecture, Response regulatory spans 826–940 (MILVVDDHPI…VIKQTLTLYA (115 aa)). D875 is modified (4-aspartylphosphate).

Belongs to the RcsC family. As to quaternary structure, interacts with RcsD. In terms of processing, autophosphorylated. Activation probably requires a transfer of a phosphate group from a His in the transmitter domain to an Asp in the receiver domain.

The protein resides in the cell inner membrane. The enzyme catalyses ATP + protein L-histidine = ADP + protein N-phospho-L-histidine.. The Rcs phosphorelay may be activated by RcsF. DjlA, LolA and OmpG might act as a regulator of the phosphorelay. Activity is probably up-regulated by YmgA/AriR, and possibly down-regulated by YcgZ, all 3 are connector proteins providing additional signal input into signaling system. Component of the Rcs signaling system, which controls transcription of numerous genes. RcsC functions as a membrane-associated protein kinase that phosphorylates RcsD in response to environmental signals. The phosphoryl group is then transferred to the response regulator RcsB. RcsC also has phosphatase activity. The system controls expression of genes involved in colanic acid capsule synthesis, biofilm formation and cell division. The protein is Sensor histidine kinase RcsC of Escherichia coli (strain K12).